Reading from the N-terminus, the 154-residue chain is Endoribonuclease YbeY (154 aa).

Zn(2+) is bound by residues histidine 113, histidine 117, and histidine 123.

The protein belongs to the endoribonuclease YbeY family. Requires Zn(2+) as cofactor.

It is found in the cytoplasm. Functionally, single strand-specific metallo-endoribonuclease involved in late-stage 70S ribosome quality control and in maturation of the 3' terminus of the 16S rRNA. The sequence is that of Endoribonuclease YbeY from Vibrio vulnificus (strain CMCP6).